A 491-amino-acid polypeptide reads, in one-letter code: Cytochrome P450 2F2 (491 aa).

C436 contributes to the heme binding site.

It belongs to the cytochrome P450 family. Heme serves as cofactor.

It is found in the endoplasmic reticulum membrane. The protein localises to the microsome membrane. In terms of biological role, involved in the regio- and stereoselective transformation of naphthalene to trans-1R-hydroxy-2R-glutathionyl-1,2-dihydronaphthalene in the presence of glutathione and glutathione S-transferases. It specifically catalyzes the production of a very reactive and potentially toxic intermediate, the 2R,2S arene oxide, that is associated with necrosis of the unciliated bronchiolar epithelial cells or club cells in lung. In Rattus norvegicus (Rat), this protein is Cytochrome P450 2F2 (Cyp2f2).